The chain runs to 759 residues: Holliday junction resolvase YEN1 (759 aa).

3 disordered regions span residues 62 to 83, 498 to 518, and 683 to 702; these read RSRSRSPTRSPRDSDIDSSQEY, SQSPLKRSNSPSRSKSPTRRQ, and KSRTTNAEKNPPESGLKSRS. A compositionally biased stretch (low complexity) spans 500 to 512; that stretch reads SPLKRSNSPSRSK. Phosphoserine occurs at positions 730 and 731.

It belongs to the XPG/RAD2 endonuclease family. GEN subfamily.

Its subcellular location is the cytoplasm. It localises to the nucleus. Functionally, endonuclease which resolves Holliday junctions by the introduction of symmetrically related cuts across the junction point, to produce nicked duplex products in which the nicks can be readily ligated. Four-way DNA intermediates, also known as Holliday junctions, are formed during homologous recombination and DNA repair, and their resolution is necessary for proper chromosome segregation. Involved in DNA-damage repair in vegetative cells. In Saccharomyces cerevisiae (strain ATCC 204508 / S288c) (Baker's yeast), this protein is Holliday junction resolvase YEN1 (YEN1).